Reading from the N-terminus, the 581-residue chain is Arginine--tRNA ligase (581 aa).

The 'HIGH' region signature appears at 122–132; the sequence is PNVAKPMHVGH.

This sequence belongs to the class-I aminoacyl-tRNA synthetase family. In terms of assembly, monomer.

It is found in the cytoplasm. It catalyses the reaction tRNA(Arg) + L-arginine + ATP = L-arginyl-tRNA(Arg) + AMP + diphosphate. In Francisella tularensis subsp. holarctica (strain FTNF002-00 / FTA), this protein is Arginine--tRNA ligase.